A 261-amino-acid chain; its full sequence is Proliferating cell nuclear antigen (261 aa).

Residues 7 to 100 (VQGSILKKVL…RAEDNADTLA (94 aa)) are interaction with NUDT15. 3 positions are modified to N6-acetyllysine: Lys14, Lys77, and Lys80. Residues 61 to 80 (RCDRNLAMGVNLTSMSKILK) mediate DNA binding. A disulfide bridge connects residues Cys135 and Cys162. Lys164 participates in a covalent cross-link: Glycyl lysine isopeptide (Lys-Gly) (interchain with G-Cter in SUMO2); alternate. Residue Lys164 forms a Glycyl lysine isopeptide (Lys-Gly) (interchain with G-Cter in ubiquitin); alternate linkage. Residue Tyr211 is modified to Phosphotyrosine; by EGFR. Residue Lys248 is modified to N6-acetyllysine. Residue Lys254 forms a Glycyl lysine isopeptide (Lys-Gly) (interchain with G-Cter in SUMO2) linkage.

It belongs to the PCNA family. In terms of assembly, homotrimer. Interacts with p300/EP300; the interaction occurs on chromatin in UV-irradiated damaged cells. Interacts with CREBBP (via transactivation domain and C-terminus); the interaction occurs on chromatin in UV-irradiated damaged cells. Directly interacts with POLD1, POLD3 and POLD4 subunits of the DNA polymerase delta complex, POLD3 being the major interacting partner; the interaction with POLD3 is inhibited by CDKN1A/p21(CIP1). Forms a complex with activator 1 heteropentamer in the presence of ATP. Interacts with EXO1, POLH, POLK, DNMT1, ERCC5, FEN1, CDC6 and POLDIP2. Interacts with POLB. Interacts with APEX2; this interaction is triggered by reactive oxygen species and increased by misincorporation of uracil in nuclear DNA. Forms a ternary complex with DNTTIP2 and core histone. Interacts with KCTD10 and PPP1R15A. Interacts with SMARCA5/SNF2H. Interacts with BAZ1B/WSTF; the interaction is direct and is required for BAZ1B/WSTF binding to replication foci during S phase. Interacts with HLTF and SHPRH. Interacts with NUDT15; this interaction is disrupted in response to UV irradiation and acetylation. Interacts with CDKN1A/p21(CIP1) and CDT1; interacts via their PIP-box which also recruits the DCX(DTL) complex. The interaction with CDKN1A inhibits POLD3 binding. Interacts with DDX11. Interacts with EGFR; positively regulates PCNA. Interacts with PARPBP. Interacts (when ubiquitinated) with SPRTN; leading to enhance RAD18-mediated PCNA ubiquitination. Interacts (when polyubiquitinated) with ZRANB3. Interacts with SMARCAD1. Interacts with CDKN1C. Interacts with PCLAF (via PIP-box). Interacts with RTEL1 (via PIP-box); the interaction is direct and essential for the suppression of telomere fragility. Interacts with FAM111A (via PIP-box); the interaction is direct and required for PCNA loading on chromatin binding. Interacts with LIG1. Interacts with SETMAR. Interacts with ANKRD17. Interacts with FBXO18/FBH1 (via PIP-box); the interaction recruits the DCX(DTL) complex and promotes ubiquitination and degradation of FBXO18/FBH1. Interacts with POLN. Interacts with SDE2 (via PIP-box); the interaction is direct and prevents ultraviolet light induced monoubiquitination. Component of the replisome complex composed of at least DONSON, MCM2, MCM7, PCNA and TICRR; interaction at least with PCNA occurs during DNA replication. Interacts with MAPK15; the interaction is chromatin binding dependent and prevents MDM2-mediated PCNA destruction by inhibiting the association of PCNA with MDM2. Interacts with PARP10 (via PIP-box). Interacts with DDI2. Interacts with HMCES (via PIP-box). Interacts with TRAIP (via PIP-box). Interacts with UHRF2. Interacts with ALKBH2; this interaction is enhanced during the S-phase of the cell cycle. Interacts with ATAD5; the interaction promotes USP1-mediated PCNA deubiquitination. Interacts with DNA damage up-regulated protein DDUP. Interacts (when phosphorylated) with GRB2. Interacts with ANG. Interacts with nuclear UNG (isoform 2); this interaction mediates UNG recruitment to S-phase replication foci. Interacts with ERCC6L2 (via an atypical PIP-box); this interaction facilitates cenrtomeric localization of ERCC6L2. (Microbial infection) Interacts with herpes virus 8 protein LANA1. Post-translationally, phosphorylated. Phosphorylation at Tyr-211 by EGFR stabilizes chromatin-associated PCNA. Acetylated by CREBBP and p300/EP300; preferentially acetylated by CREBBP on Lys-80, Lys-13 and Lys-14 and on Lys-77 by p300/EP300 upon loading on chromatin in response to UV irradiation. Lysine acetylation disrupts association with chromatin, hence promoting PCNA ubiquitination and proteasomal degradation in response to UV damage in a CREBBP- and EP300-dependent manner. Acetylation disrupts interaction with NUDT15 and promotes degradation. In terms of processing, ubiquitinated. Following DNA damage, can be either monoubiquitinated to stimulate direct bypass of DNA lesions by specialized DNA polymerases or polyubiquitinated to promote recombination-dependent DNA synthesis across DNA lesions by template switching mechanisms. Following induction of replication stress, monoubiquitinated by the UBE2B-RAD18 complex on Lys-164, leading to recruit translesion (TLS) polymerases, which are able to synthesize across DNA lesions in a potentially error-prone manner. An error-free pathway also exists and requires non-canonical polyubiquitination on Lys-164 through 'Lys-63' linkage of ubiquitin moieties by the E2 complex UBE2N-UBE2V2 and the E3 ligases, HLTF, RNF8 and SHPRH. This error-free pathway, also known as template switching, employs recombination mechanisms to synthesize across the lesion, using as a template the undamaged, newly synthesized strand of the sister chromatid. Monoubiquitination at Lys-164 also takes place in undamaged proliferating cells, and is mediated by the DCX(DTL) complex, leading to enhance PCNA-dependent translesion DNA synthesis. Sumoylated during S phase. Post-translationally, methylated on glutamate residues by ARMT1/C6orf211.

It localises to the nucleus. Functionally, auxiliary protein of DNA polymerase delta and epsilon, is involved in the control of eukaryotic DNA replication by increasing the polymerase's processibility during elongation of the leading strand. Induces a robust stimulatory effect on the 3'-5' exonuclease and 3'-phosphodiesterase, but not apurinic-apyrimidinic (AP) endonuclease, APEX2 activities. Has to be loaded onto DNA in order to be able to stimulate APEX2. Plays a key role in DNA damage response (DDR) by being conveniently positioned at the replication fork to coordinate DNA replication with DNA repair and DNA damage tolerance pathways. Acts as a loading platform to recruit DDR proteins that allow completion of DNA replication after DNA damage and promote postreplication repair: Monoubiquitinated PCNA leads to recruitment of translesion (TLS) polymerases, while 'Lys-63'-linked polyubiquitination of PCNA is involved in error-free pathway and employs recombination mechanisms to synthesize across the lesion. The sequence is that of Proliferating cell nuclear antigen (PCNA) from Homo sapiens (Human).